Here is a 27-residue protein sequence, read N- to C-terminus: Augerpeptide hhe6.2 (27 aa).

3 cysteine pairs are disulfide-bonded: C4/C13, C8/C20, and C12/C27.

In terms of tissue distribution, expressed by the venom duct.

It is found in the secreted. This chain is Augerpeptide hhe6.2, found in Hastula hectica (Sea snail).